We begin with the raw amino-acid sequence, 448 residues long: Trigger factor (448 aa).

The PPIase FKBP-type domain occupies 172 to 257 (GDRVTVDFVG…MKKIEWPHLP (86 aa)).

It belongs to the FKBP-type PPIase family. Tig subfamily.

The protein resides in the cytoplasm. It catalyses the reaction [protein]-peptidylproline (omega=180) = [protein]-peptidylproline (omega=0). Functionally, involved in protein export. Acts as a chaperone by maintaining the newly synthesized protein in an open conformation. Functions as a peptidyl-prolyl cis-trans isomerase. This chain is Trigger factor, found in Burkholderia orbicola (strain MC0-3).